We begin with the raw amino-acid sequence, 711 residues long: Exotoxin translocation ATP-binding protein PaxB (711 aa).

The Peptidase C39 domain occupies Met1–Leu129. 5 consecutive transmembrane segments (helical) span residues Ile157–Leu177, Leu195–Leu215, Ala273–Tyr293, Ile299–Leu319, and Val392–Gly412. Positions Phe158–Gln440 constitute an ABC transmembrane type-1 domain. In terms of domain architecture, ABC transporter spans Val472–Gln707. ATP is bound at residue Gly506–Ser513.

Belongs to the ABC transporter superfamily. Protein-1 exporter (TC 3.A.1.109) family. In terms of assembly, homodimer.

The protein resides in the cell inner membrane. It carries out the reaction ATP + H2O + proteinSide 1 = ADP + phosphate + proteinSide 2.. Functionally, part of the ABC transporter complex PaxBD involved in PaxA export. Transmembrane domains (TMD) form a pore in the inner membrane and the ATP-binding domain (NBD) is responsible for energy generation. The polypeptide is Exotoxin translocation ATP-binding protein PaxB (paxB) (Pasteurella aerogenes).